The chain runs to 59 residues: Large ribosomal subunit protein uL30 (59 aa).

This sequence belongs to the universal ribosomal protein uL30 family. Part of the 50S ribosomal subunit.

This chain is Large ribosomal subunit protein uL30, found in Solidesulfovibrio magneticus (strain ATCC 700980 / DSM 13731 / RS-1) (Desulfovibrio magneticus).